We begin with the raw amino-acid sequence, 160 residues long: Major strawberry allergen Fra a 1-E (160 aa).

This sequence belongs to the BetVI family. Monomer. Interacts with AP. Highly expressed in roots. Expressed in open flowers. Expressed at low levels in leaves, flower buds and fruits.

In terms of biological role, involved in the control of flavonoid biosynthesis in fruits, probably by binding directly to natural flavonoids. Binds the natural flavonoid quercetin-3-O-glucuronide with affinities in the low micromolar range. The sequence is that of Major strawberry allergen Fra a 1-E from Fragaria ananassa (Strawberry).